Here is a 373-residue protein sequence, read N- to C-terminus: DNA replication and repair protein RecF (373 aa).

30–37 (GANGSGKT) serves as a coordination point for ATP.

Belongs to the RecF family.

The protein localises to the cytoplasm. The RecF protein is involved in DNA metabolism; it is required for DNA replication and normal SOS inducibility. RecF binds preferentially to single-stranded, linear DNA. It also seems to bind ATP. The sequence is that of DNA replication and repair protein RecF from Marinobacter nauticus (strain ATCC 700491 / DSM 11845 / VT8) (Marinobacter aquaeolei).